The chain runs to 412 residues: MSTKLCQRIARTATLSPTSLVPRSSRLIPIVSSAAVRPSSAIPTRRPFSTTESRYLANVQAGMDKIRDAIAENFGGPAHNIGTTSFSLDDTPDLSGKVAVITGGSEGIGYGVAYTLIKHNLSKLFILSRKREVFDGALASIASELGQDKADRVHWIQCNLEDWAQTAVVAEQIKKDTDRLDILVNNSGRGIMTAGLTSYGVDKHMATNHMGHVVLTSHLLPLLQKTAEETGETVRISNQSSNLHSAAPKGTQFKSLEEINEDVGPNGQYGRSKLAGILYARYFDREVTRKMEGSKGRVVMNATHPGFVSTKQSVKDIHEPYPISGFAISHLAEPFKKDQFEGAVPTVYAVTMANEGGQWICAPAKAEAGTDLAQSDELADNLMELTRKIISEKTWPKSVAKGCPMDDVVVHV.

The transit peptide at 1-55 (MSTKLCQRIARTATLSPTSLVPRSSRLIPIVSSAAVRPSSAIPTRRPFSTTESRY) directs the protein to the mitochondrion. The NADP(+) site is built by isoleucine 108, asparagine 120, asparagine 186, tyrosine 269, lysine 273, valine 308, threonine 310, and glutamine 312. Residue tyrosine 269 is the Proton donor of the active site. Lysine 273 acts as the Lowers pKa of active site Tyr in catalysis.

This sequence belongs to the short-chain dehydrogenases/reductases (SDR) family.

It localises to the mitochondrion. In terms of biological role, may play a role as an NAD-dependent dehydrogenase in the mitochondria. This is Putative oxidoreductase bli-4, mitochondrial (bli-4) from Neurospora crassa (strain ATCC 24698 / 74-OR23-1A / CBS 708.71 / DSM 1257 / FGSC 987).